Consider the following 177-residue polypeptide: ATP synthase subunit b (177 aa).

The chain crosses the membrane as a helical span at residues Phe29–Pro49.

It belongs to the ATPase B chain family. F-type ATPases have 2 components, F(1) - the catalytic core - and F(0) - the membrane proton channel. F(1) has five subunits: alpha(3), beta(3), gamma(1), delta(1), epsilon(1). F(0) has three main subunits: a(1), b(2) and c(10-14). The alpha and beta chains form an alternating ring which encloses part of the gamma chain. F(1) is attached to F(0) by a central stalk formed by the gamma and epsilon chains, while a peripheral stalk is formed by the delta and b chains.

It localises to the cell membrane. F(1)F(0) ATP synthase produces ATP from ADP in the presence of a proton or sodium gradient. F-type ATPases consist of two structural domains, F(1) containing the extramembraneous catalytic core and F(0) containing the membrane proton channel, linked together by a central stalk and a peripheral stalk. During catalysis, ATP synthesis in the catalytic domain of F(1) is coupled via a rotary mechanism of the central stalk subunits to proton translocation. Its function is as follows. Component of the F(0) channel, it forms part of the peripheral stalk, linking F(1) to F(0). This chain is ATP synthase subunit b, found in Mycolicibacterium paratuberculosis (strain ATCC BAA-968 / K-10) (Mycobacterium paratuberculosis).